The primary structure comprises 218 residues: Glutathione S-transferase class-mu 26 kDa isozyme 7 (218 aa).

Residues 2 to 83 (PAKLGYWKIR…YIADKHGMLG (82 aa)) form the GST N-terminal domain. Glutathione contacts are provided by residues 7 to 8 (YW), 41 to 45 (WLGDK), 54 to 55 (NL), and 67 to 68 (QS). Positions 85-203 (TPEERARISM…KSERFIKWPL (119 aa)) constitute a GST C-terminal domain. Substrate is bound at residue Tyr-111.

The protein belongs to the GST superfamily. Mu family. As to quaternary structure, homodimer.

The catalysed reaction is RX + glutathione = an S-substituted glutathione + a halide anion + H(+). Its function is as follows. Conjugation of reduced glutathione to a wide number of exogenous and endogenous hydrophobic electrophiles. GST isoenzymes appear to play a central role in the parasite detoxification system. Other functions are also suspected including a role in increasing the solubility of haematin in the parasite gut. The chain is Glutathione S-transferase class-mu 26 kDa isozyme 7 from Fasciola hepatica (Liver fluke).